Consider the following 475-residue polypeptide: Ankyrin repeat, SAM and basic leucine zipper domain-containing protein 1 (475 aa).

The tract at residues 1–25 (MAAGTLRGLAVAGGGESSDSEDDGW) is disordered. S17, S18, and S20 each carry phosphoserine. ANK repeat units follow at residues 45 to 74 (EKNE…NVDS), 78 to 107 (YGWT…NASF), 110 to 144 (DKLT…DPNT), 148 to 177 (RLMT…EVNA), 181 to 210 (NGYT…NKML), and 214 to 243 (DGRT…PLEG). One can recognise an SAM domain in the interval 272-334 (PYTAFGDLEI…KILAALKELE (63 aa)).

As to quaternary structure, interacts with DDX4, PIWIL1, RANBP9 and TDRD1. As to expression, expressed exclusively in testis and ovary with higher levels in testis.

The protein localises to the cytoplasm. In terms of biological role, plays a central role during spermatogenesis by repressing transposable elements and preventing their mobilization, which is essential for the germline integrity. Acts via the piRNA metabolic process, which mediates the repression of transposable elements during meiosis by forming complexes composed of piRNAs and Piwi proteins and governs the methylation and subsequent repression of transposons. Its association with pi-bodies suggests a participation in the primary piRNAs metabolic process. Required prior to the pachytene stage to facilitate the production of multiple types of piRNAs, including those associated with repeats involved in regulation of retrotransposons. May act by mediating protein-protein interactions during germ cell maturation. This chain is Ankyrin repeat, SAM and basic leucine zipper domain-containing protein 1, found in Mus musculus (Mouse).